The chain runs to 89 residues: Small ribosomal subunit protein uS15 (89 aa).

It belongs to the universal ribosomal protein uS15 family. In terms of assembly, part of the 30S ribosomal subunit. Forms a bridge to the 50S subunit in the 70S ribosome, contacting the 23S rRNA.

Functionally, one of the primary rRNA binding proteins, it binds directly to 16S rRNA where it helps nucleate assembly of the platform of the 30S subunit by binding and bridging several RNA helices of the 16S rRNA. Its function is as follows. Forms an intersubunit bridge (bridge B4) with the 23S rRNA of the 50S subunit in the ribosome. The sequence is that of Small ribosomal subunit protein uS15 from Lactobacillus delbrueckii subsp. bulgaricus (strain ATCC 11842 / DSM 20081 / BCRC 10696 / JCM 1002 / NBRC 13953 / NCIMB 11778 / NCTC 12712 / WDCM 00102 / Lb 14).